A 213-amino-acid polypeptide reads, in one-letter code: Orotidine 5'-phosphate decarboxylase (213 aa).

Substrate contacts are provided by residues D11, K33, 61–70 (DLKLADIPNT), S113, 166–176 (PGVGAQGGKAS), G189, and R190. Residue K63 is the Proton donor of the active site.

The protein belongs to the OMP decarboxylase family. Type 1 subfamily. In terms of assembly, homodimer.

It carries out the reaction orotidine 5'-phosphate + H(+) = UMP + CO2. The protein operates within pyrimidine metabolism; UMP biosynthesis via de novo pathway; UMP from orotate: step 2/2. Its function is as follows. Catalyzes the decarboxylation of orotidine 5'-monophosphate (OMP) to uridine 5'-monophosphate (UMP). The polypeptide is Orotidine 5'-phosphate decarboxylase (Thermococcus kodakarensis (strain ATCC BAA-918 / JCM 12380 / KOD1) (Pyrococcus kodakaraensis (strain KOD1))).